The following is a 339-amino-acid chain: DNA-directed RNA polymerase subunit alpha (339 aa).

The segment at 1–233 (MVREKVRIST…DLFIPFLHAE (233 aa)) is alpha N-terminal domain (alpha-NTD). The interval 267–339 (IALKSIFIDQ…FTINLPKNKF (73 aa)) is alpha C-terminal domain (alpha-CTD).

This sequence belongs to the RNA polymerase alpha chain family. In plastids the minimal PEP RNA polymerase catalytic core is composed of four subunits: alpha, beta, beta', and beta''. When a (nuclear-encoded) sigma factor is associated with the core the holoenzyme is formed, which can initiate transcription.

It localises to the plastid. The protein resides in the chloroplast. It catalyses the reaction RNA(n) + a ribonucleoside 5'-triphosphate = RNA(n+1) + diphosphate. DNA-dependent RNA polymerase catalyzes the transcription of DNA into RNA using the four ribonucleoside triphosphates as substrates. This is DNA-directed RNA polymerase subunit alpha from Populus alba (White poplar).